Here is a 56-residue protein sequence, read N- to C-terminus: Small ribosomal subunit protein bS21 (56 aa).

Belongs to the bacterial ribosomal protein bS21 family.

This Synechococcus sp. (strain WH7803) protein is Small ribosomal subunit protein bS21.